The following is a 151-amino-acid chain: D-aminoacyl-tRNA deacylase (151 aa).

The Gly-cisPro motif, important for rejection of L-amino acids motif lies at 136 to 137 (GP).

The protein belongs to the DTD family. In terms of assembly, homodimer.

It localises to the cytoplasm. The enzyme catalyses glycyl-tRNA(Ala) + H2O = tRNA(Ala) + glycine + H(+). It carries out the reaction a D-aminoacyl-tRNA + H2O = a tRNA + a D-alpha-amino acid + H(+). Its function is as follows. An aminoacyl-tRNA editing enzyme that deacylates mischarged D-aminoacyl-tRNAs. Also deacylates mischarged glycyl-tRNA(Ala), protecting cells against glycine mischarging by AlaRS. Acts via tRNA-based rather than protein-based catalysis; rejects L-amino acids rather than detecting D-amino acids in the active site. By recycling D-aminoacyl-tRNA to D-amino acids and free tRNA molecules, this enzyme counteracts the toxicity associated with the formation of D-aminoacyl-tRNA entities in vivo and helps enforce protein L-homochirality. This chain is D-aminoacyl-tRNA deacylase, found in Lactococcus lactis subsp. cremoris (strain SK11).